Reading from the N-terminus, the 387-residue chain is Putative 8-amino-7-oxononanoate synthase (387 aa).

R19 contributes to the substrate binding site. Pyridoxal 5'-phosphate is bound at residue G107–Y108. H132 is a substrate binding site. Residues S180, D206 to H209, and T237 to K240 each bind pyridoxal 5'-phosphate. K240 is modified (N6-(pyridoxal phosphate)lysine). T354 lines the substrate pocket.

The protein belongs to the class-II pyridoxal-phosphate-dependent aminotransferase family. BioF subfamily. Homodimer. The cofactor is pyridoxal 5'-phosphate.

The enzyme catalyses 6-carboxyhexanoyl-[ACP] + L-alanine + H(+) = (8S)-8-amino-7-oxononanoate + holo-[ACP] + CO2. It participates in cofactor biosynthesis; biotin biosynthesis. Functionally, catalyzes the decarboxylative condensation of pimeloyl-[acyl-carrier protein] and L-alanine to produce 8-amino-7-oxononanoate (AON), [acyl-carrier protein], and carbon dioxide. In Pasteurella multocida (strain Pm70), this protein is Putative 8-amino-7-oxononanoate synthase (bioF).